The following is a 279-amino-acid chain: Undecaprenyl-diphosphatase (279 aa).

The next 8 membrane-spanning stretches (helical) occupy residues 2–22, 44–64, 85–105, 113–133, 163–183, 188–208, 225–245, and 255–275; these read LFIELLKAIFFGVIEGVTEWL, AFMEMFNIVIQLGAIIAVIVI, WQLWLKVAIACIPSIIIAVPL, FNHMLPIAIALIVYGIAFLWI, VLSIIPGTSRSGATILGAIIL, TVAADFTFFLAIPTMFGYSGL, LLVLLVASLTAFAVSLYVIKL, and FTVFGRYRIVLGSLLIVYSVF.

This sequence belongs to the UppP family.

It localises to the cell membrane. The enzyme catalyses di-trans,octa-cis-undecaprenyl diphosphate + H2O = di-trans,octa-cis-undecaprenyl phosphate + phosphate + H(+). Catalyzes the dephosphorylation of undecaprenyl diphosphate (UPP). Confers resistance to bacitracin. The polypeptide is Undecaprenyl-diphosphatase (Streptococcus equi subsp. zooepidemicus (strain MGCS10565)).